The following is a 333-amino-acid chain: DNA-3-methyladenine glycosylase (333 aa).

A compositionally biased stretch (low complexity) spans 1–14; that stretch reads MPARGGSARPGRGA. The interval 1–42 is disordered; the sequence is MPARGGSARPGRGALKPVSVTLLPDTEQPPFLGRARRPGNAR. A phosphoserine mark is found at S98 and S272.

Belongs to the DNA glycosylase MPG family. As to quaternary structure, binds MBD1. Binds SSBP1.

It is found in the cytoplasm. The protein resides in the mitochondrion matrix. Its subcellular location is the mitochondrion nucleoid. The protein localises to the nucleus. The catalysed reaction is Hydrolysis of alkylated DNA, releasing 3-methyladenine, 3-methylguanine, 7-methylguanine and 7-methyladenine.. Binding to SSBP1 in mitochondria inhibits glycosylase activity in the context of a single-stranded DNA (ssDNA), but not a double-stranded DNA (dsDNA) substrates. Hydrolysis of the deoxyribose N-glycosidic bond to excise 3-methyladenine, and 7-methylguanine from the damaged DNA polymer formed by alkylation lesions. The polypeptide is DNA-3-methyladenine glycosylase (Mpg) (Mus musculus (Mouse)).